A 261-amino-acid chain; its full sequence is MGETFSQLASQKDENKLILPPNPAFGSKAASYSSMGNSRPFFSCVPCERAAGAGFVTCPTCQGSGEIPRELEKQLVALIPYGDQRLKPRHTKLSVFLAVSICLVTSSLIIFFLFPRTIAVQPVGLNSSTVATDEANVYLNITSILNISNNNYCPITVTQLTIEVLHLSLVVGQVSHSLLLHIGPLASEQMFYAVTNRINDENTYKICTWLEIKVHHVLLYIQGTLTYSYLSRSEQLVFQSYEYVDCRGNTSVPHLLVSHPP.

Residues 95 to 115 traverse the membrane as a helical segment; sequence VFLAVSICLVTSSLIIFFLFP.

This sequence belongs to the TMEM106 family.

It is found in the cell membrane. Activates macrophages and polarizes them into M1-like macrophages through the activation of the MAPK and NF-kappaB signaling pathway. Upon activation, up-regulates the expression of CD80, CD86, CD69 and MHC II on macrophages, and induces the release of pro-inflammatory cytokines such as TNF, IL1B, IL6, CCL2 and nitric oxide. May play a role in inhibition of proliferation and migration. The chain is Transmembrane protein 106A (TMEM106A) from Bos taurus (Bovine).